Here is a 252-residue protein sequence, read N- to C-terminus: Imidazole glycerol phosphate synthase subunit HisF (252 aa).

Active-site residues include Asp11 and Asp130.

The protein belongs to the HisA/HisF family. In terms of assembly, heterodimer of HisH and HisF.

Its subcellular location is the cytoplasm. The enzyme catalyses 5-[(5-phospho-1-deoxy-D-ribulos-1-ylimino)methylamino]-1-(5-phospho-beta-D-ribosyl)imidazole-4-carboxamide + L-glutamine = D-erythro-1-(imidazol-4-yl)glycerol 3-phosphate + 5-amino-1-(5-phospho-beta-D-ribosyl)imidazole-4-carboxamide + L-glutamate + H(+). It functions in the pathway amino-acid biosynthesis; L-histidine biosynthesis; L-histidine from 5-phospho-alpha-D-ribose 1-diphosphate: step 5/9. Functionally, IGPS catalyzes the conversion of PRFAR and glutamine to IGP, AICAR and glutamate. The HisF subunit catalyzes the cyclization activity that produces IGP and AICAR from PRFAR using the ammonia provided by the HisH subunit. This Thermococcus kodakarensis (strain ATCC BAA-918 / JCM 12380 / KOD1) (Pyrococcus kodakaraensis (strain KOD1)) protein is Imidazole glycerol phosphate synthase subunit HisF.